The sequence spans 519 residues: Ribose import ATP-binding protein RbsA 2 (519 aa).

ABC transporter domains follow at residues 15–252 and 262–506; these read FRLR…VGRP and HEPG…TGVR. 47–54 contacts ATP; that stretch reads GENGAGKS.

Belongs to the ABC transporter superfamily. Ribose importer (TC 3.A.1.2.1) family. As to quaternary structure, the complex is composed of an ATP-binding protein (RbsA), two transmembrane proteins (RbsC) and a solute-binding protein (RbsB).

The protein resides in the cell membrane. The catalysed reaction is D-ribose(out) + ATP + H2O = D-ribose(in) + ADP + phosphate + H(+). Its function is as follows. Part of the ABC transporter complex RbsABC involved in ribose import. Responsible for energy coupling to the transport system. This is Ribose import ATP-binding protein RbsA 2 from Rubrobacter xylanophilus (strain DSM 9941 / JCM 11954 / NBRC 16129 / PRD-1).